The chain runs to 615 residues: Dihydroxy-acid dehydratase (615 aa).

Mg(2+) is bound at residue D81. Residue C122 coordinates [2Fe-2S] cluster. 2 residues coordinate Mg(2+): D123 and K124. K124 is subject to N6-carboxylysine. Position 193 (C193) interacts with [2Fe-2S] cluster. E489 serves as a coordination point for Mg(2+). S515 acts as the Proton acceptor in catalysis.

This sequence belongs to the IlvD/Edd family. Homodimer. It depends on [2Fe-2S] cluster as a cofactor. Requires Mg(2+) as cofactor.

The enzyme catalyses (2R)-2,3-dihydroxy-3-methylbutanoate = 3-methyl-2-oxobutanoate + H2O. It catalyses the reaction (2R,3R)-2,3-dihydroxy-3-methylpentanoate = (S)-3-methyl-2-oxopentanoate + H2O. The protein operates within amino-acid biosynthesis; L-isoleucine biosynthesis; L-isoleucine from 2-oxobutanoate: step 3/4. It participates in amino-acid biosynthesis; L-valine biosynthesis; L-valine from pyruvate: step 3/4. Its function is as follows. Functions in the biosynthesis of branched-chain amino acids. Catalyzes the dehydration of (2R,3R)-2,3-dihydroxy-3-methylpentanoate (2,3-dihydroxy-3-methylvalerate) into 2-oxo-3-methylpentanoate (2-oxo-3-methylvalerate) and of (2R)-2,3-dihydroxy-3-methylbutanoate (2,3-dihydroxyisovalerate) into 2-oxo-3-methylbutanoate (2-oxoisovalerate), the penultimate precursor to L-isoleucine and L-valine, respectively. The sequence is that of Dihydroxy-acid dehydratase from Pseudomonas savastanoi pv. phaseolicola (strain 1448A / Race 6) (Pseudomonas syringae pv. phaseolicola (strain 1448A / Race 6)).